The following is a 1010-amino-acid chain: Outer kinetochore KNL1 complex subunit knl-1 (1010 aa).

9 tandem repeats follow at residues 85 to 88 (MDIS), 109 to 112 (MDMS), 228 to 231 (MDTS), 255 to 258 (MDIT), 278 to 281 (MDIS), 323 to 326 (MDIT), 346 to 349 (MDIS), 402 to 405 (MDIT), and 428 to 431 (MDIS). The segment at 85 to 431 (MDISESPACT…LQKEDLMDIS (347 aa)) is 9 X 4 AA repeats of M-[D/E]-[I/L/M]-[S/T]. Coiled coils occupy residues 820–915 (RIVE…GLDK) and 956–988 (KALRNVRSNMIALRSEKNALEMKVAEEHEKFAQ).

As to quaternary structure, component of the KNL1 complex composed of knl-1 and kbp-5. Part of the ten-subunit outer kinetochore KMN network that includes the KNL1, MIS12 and NDC80 complexes. Interacts with the protein phosphatase 1 (PP1) catalytic subunit gsp-1; the interaction is direct. Interacts with the protein phosphatase 1 (PP1) catalytic subunit gsp-2; the interaction is direct. Interacts with the MIS12 complex subunits kbp-1, kbp-2 and mis-12. Interacts with the NDC80 complex components ndc-80 and him-10. Interacts with knl-3. Interacts with kbp-3. Interacts with kbp-4. Interacts with kbp-5.

The protein localises to the cytoplasm. The protein resides in the cell cortex. It is found in the chromosome. It localises to the centromere. Its subcellular location is the kinetochore. Functionally, acts as a component of the outer kinetochore KNL1 complex that serves as a docking point for spindle assembly checkpoint components and mediates microtubule-kinetochore interactions. Kinetochores, consisting of a centromere-associated inner segment and a microtubule-contacting outer segment, play a crucial role in chromosome segregation by mediating the physical connection between centromeric DNA and spindle microtubules. The outer kinetochore is made up of the ten-subunit KMN network, comprising the MIS12, NDC80 and KNL1 complexes, and auxiliary microtubule-associated components; together they connect the outer kinetochore with the inner kinetochore, bind microtubules, and mediate interactions with mitotic checkpoint proteins that delay anaphase until chromosomes are bioriented on the spindle. Binds the protein phosphatase 1 catalytic subunits gsp-1 and gsp-2, which has a role in delaying formation of load-bearing kinetochore-microtubule attachments. Required for the recruitment of spindle-assembly checkpoint components bub-1 and mdf-1/2 to unattached kinetochores. Binds microtubules which plays a role in silencing of the spindle assembly checkpoint, but not the formation of load-bearing microtubule-kinetochore attachments. Has a role in the correct localization of the spindly-like protein spdl-1 and the RZZ complex that is composed of rod-1, czw-1 and zwl-1 to kinetochores. The polypeptide is Outer kinetochore KNL1 complex subunit knl-1 (knl-1) (Caenorhabditis elegans).